The sequence spans 274 residues: ATP synthase subunit b 2 (274 aa).

A helical membrane pass occupies residues 2–22; the sequence is HIDWFVLLAQLVNFLILIYLL.

The protein belongs to the ATPase B chain family. F-type ATPases have 2 components, F(1) - the catalytic core - and F(0) - the membrane proton channel. F(1) has five subunits: alpha(3), beta(3), gamma(1), delta(1), epsilon(1). F(0) has three main subunits: a(1), b(2) and c(10-14). The alpha and beta chains form an alternating ring which encloses part of the gamma chain. F(1) is attached to F(0) by a central stalk formed by the gamma and epsilon chains, while a peripheral stalk is formed by the delta and b chains.

It localises to the cell inner membrane. Functionally, f(1)F(0) ATP synthase produces ATP from ADP in the presence of a proton or sodium gradient. F-type ATPases consist of two structural domains, F(1) containing the extramembraneous catalytic core and F(0) containing the membrane proton channel, linked together by a central stalk and a peripheral stalk. During catalysis, ATP synthesis in the catalytic domain of F(1) is coupled via a rotary mechanism of the central stalk subunits to proton translocation. In terms of biological role, component of the F(0) channel, it forms part of the peripheral stalk, linking F(1) to F(0). The sequence is that of ATP synthase subunit b 2 from Syntrophus aciditrophicus (strain SB).